The sequence spans 62 residues: Sperm protamine P1 (62 aa).

The disordered stretch occupies residues 1 to 62; it reads MARYRRHSRS…RRYSRRGRRR (62 aa).

Belongs to the protamine P1 family. As to expression, testis.

It localises to the nucleus. Its subcellular location is the chromosome. In terms of biological role, protamines substitute for histones in the chromatin of sperm during the haploid phase of spermatogenesis. They compact sperm DNA into a highly condensed, stable and inactive complex. This chain is Sperm protamine P1 (PRM1), found in Pseudantechinus bilarni (Sandstone dibbler).